The sequence spans 456 residues: Bifunctional protein GlmU (456 aa).

Residues 1–229 are pyrophosphorylase; that stretch reads MLNSAMSVVI…ISETDGVNNR (229 aa). UDP-N-acetyl-alpha-D-glucosamine-binding positions include 11-14, lysine 25, glutamine 76, 81-82, 103-105, glycine 140, glutamate 154, asparagine 169, and asparagine 227; these read LAAG, GT, and YGD. Position 105 (aspartate 105) interacts with Mg(2+). Position 227 (asparagine 227) interacts with Mg(2+). Residues 230–250 are linker; the sequence is LQLSRLERIYQAEQAEKLLLS. Residues 251 to 456 form an N-acetyltransferase region; it reads GVMLRDPARF…QGWQRPVKKK (206 aa). Positions 333 and 351 each coordinate UDP-N-acetyl-alpha-D-glucosamine. Histidine 363 functions as the Proton acceptor in the catalytic mechanism. UDP-N-acetyl-alpha-D-glucosamine-binding residues include tyrosine 366 and asparagine 377. Acetyl-CoA contacts are provided by residues alanine 380, 386–387, serine 405, alanine 423, and arginine 440; that span reads NY.

It in the N-terminal section; belongs to the N-acetylglucosamine-1-phosphate uridyltransferase family. This sequence in the C-terminal section; belongs to the transferase hexapeptide repeat family. Homotrimer. Mg(2+) is required as a cofactor.

Its subcellular location is the cytoplasm. It catalyses the reaction alpha-D-glucosamine 1-phosphate + acetyl-CoA = N-acetyl-alpha-D-glucosamine 1-phosphate + CoA + H(+). The catalysed reaction is N-acetyl-alpha-D-glucosamine 1-phosphate + UTP + H(+) = UDP-N-acetyl-alpha-D-glucosamine + diphosphate. It functions in the pathway nucleotide-sugar biosynthesis; UDP-N-acetyl-alpha-D-glucosamine biosynthesis; N-acetyl-alpha-D-glucosamine 1-phosphate from alpha-D-glucosamine 6-phosphate (route II): step 2/2. It participates in nucleotide-sugar biosynthesis; UDP-N-acetyl-alpha-D-glucosamine biosynthesis; UDP-N-acetyl-alpha-D-glucosamine from N-acetyl-alpha-D-glucosamine 1-phosphate: step 1/1. The protein operates within bacterial outer membrane biogenesis; LPS lipid A biosynthesis. Functionally, catalyzes the last two sequential reactions in the de novo biosynthetic pathway for UDP-N-acetylglucosamine (UDP-GlcNAc). The C-terminal domain catalyzes the transfer of acetyl group from acetyl coenzyme A to glucosamine-1-phosphate (GlcN-1-P) to produce N-acetylglucosamine-1-phosphate (GlcNAc-1-P), which is converted into UDP-GlcNAc by the transfer of uridine 5-monophosphate (from uridine 5-triphosphate), a reaction catalyzed by the N-terminal domain. This is Bifunctional protein GlmU from Salmonella dublin (strain CT_02021853).